Consider the following 35-residue polypeptide: Putative gastric cancer-related gene 224 protein (35 aa).

Expressed in gastric mucosa.

The polypeptide is Putative gastric cancer-related gene 224 protein (GCRG224) (Homo sapiens (Human)).